Reading from the N-terminus, the 79-residue chain is MKTLLLTLVVMTIVCLDLGYTLTCYMNPSGTMVCKEHETMCYRLIVWTFQYHVLYLKGCSSSCPGGNNCACCSTDLCNN.

The N-terminal stretch at 1–23 (MKTLLLTLVVMTIVCLDLGYTLT) is a signal peptide. 4 disulfide bridges follow: C24/C41, C34/C59, C63/C71, and C72/C77.

The protein belongs to the three-finger toxin family. Short-chain subfamily. As to expression, expressed by the venom gland.

The protein resides in the secreted. In Oxyuranus microlepidotus (Inland taipan), this protein is Toxin 3FTx-Oxy5.